Reading from the N-terminus, the 89-residue chain is Small ribosomal subunit protein uS17 (89 aa).

Belongs to the universal ribosomal protein uS17 family. As to quaternary structure, part of the 30S ribosomal subunit.

One of the primary rRNA binding proteins, it binds specifically to the 5'-end of 16S ribosomal RNA. The sequence is that of Small ribosomal subunit protein uS17 from Phytoplasma mali (strain AT).